The sequence spans 1037 residues: Protein brain tumor (1037 aa).

Disordered stretches follow at residues 29 to 63 and 159 to 178; these read SDSP…SRSE and SNSS…SPPR. Polar residues-rich tracts occupy residues 31–42 and 54–63; these read SPLTLSGSSPPA and GGSSVKSRSE. The span at 159–175 shows a compositional bias: low complexity; it reads SNSSSNSSSSNTSANGS. The segment at 174–222 adopts a B box-type 1; atypical zinc-finger fold; that stretch reads GSPPRCTACKSKCSDAVAKCFECQSYLCANCVTAHEFMHCFNGHNVCLI. 8 residues coordinate Zn(2+): cysteine 179, cysteine 182, cysteine 204, histidine 208, cysteine 328, histidine 331, cysteine 351, and histidine 356. A B box-type 2 zinc finger spans residues 323–366; that stretch reads QRQLFCPRHKQELLKFSCRTCCILVCKECIVLEHSTGLHELENV. Residues 543–554 show a composition bias toward polar residues; that stretch reads GPTGMSLTSNGH. Residues 543–606 form a disordered region; that stretch reads GPTGMSLTSN…TAHHQQLQAQ (64 aa). The segment covering 565–577 has biased composition (low complexity); that stretch reads QSASNSSASSAGS. Residues 579 to 598 are compositionally biased toward basic residues; the sequence is HHGHHQQSHHHGHHNHHQTA. NHL repeat units lie at residues 767-810, 814-859, 860-901, 902-944, and 945-988; these read HCKF…FDKE, KFQF…YNQY, GQFV…FDQN, GNVL…FNYE, and GQYL…FTQD.

Interacts with nanos (nos) and pum. Acts via the formation of a quaternary complex composed of pum, nanos, brat and the 3'-UTR mRNA of hb. Not recruited by nanos and pum to cyclin B 3'-UTR mRNA. Might interact with mira; the interaction seems to be important for brat localization during mitosis. Interacts with Ago1. In terms of tissue distribution, expressed during embryogenesis, mainly in nervous tissues. Expressed in the embryonic central and peripheral nervous systems including the embryonic brain. In third instar larva it is expressed in the larval central nervous system including the brain and the ventral ganglion, in two glands (the ring gland and the salivary gland, and in parts of the foregut) the gastric caeca and the proventriculus.

It is found in the cytoplasm. Its subcellular location is the cell cortex. An NHL-domain family protein that functions as a translational repressor to inhibit cell proliferation. Plays a central role in translation repression of hb mRNA by being recruited by nanos (nos) and pum to the Nanos Response Element (NRE), a 16 bp sequence in the hb mRNA 3'-UTR. Probably recruited by other proteins to repress translation of other mRNAs in other tissues. Negatively regulates expression of Myc in a 3'-UTR dependent manner in both neural progenitor and epithelial cells. Regulates expression of mei-P26, possibly at transcriptional level. Involved in the regulation of ribosomal RNA synthesis and cell growth. Participates in abdominal segmentation and imaginal disk development. During neuroblast division, segregates asymmetrically and inhibits self-renewal of one of the two daughter cells. Together with the asymmetrically segregating transcription factor prospero ensures that the daughter cell will stop growing, exit the cell cycle, and differentiate into neurons possibly by modulating the function of dm in ganglion mother cells (GMC). Restricts developmental potential of type II intermediary neuronal progenitor (INP) cells playing a role in proliferation and maturation of the neuroblasts. The protein is Protein brain tumor of Drosophila melanogaster (Fruit fly).